Reading from the N-terminus, the 549-residue chain is MKRVLTALAATLPFAANAADAISGAVERQPTNWQAIIMFLIFVVFTLGITYWASKRVRSRNDYYTAGGNITGFQNGLAIAGDYMSAASFLGISALVFTSGYDGLIYSLGFLVGWPIILFLIAERLRNLGRYTFADVASYRLKQGPIRILSACGSLVVVALYLIAQMVGAGKLIELLFGLNYHIAVVLVGVLMMMYVLFGGMLATTWVQIIKAVLLLFGASFMAFMVMKHVGFSFNNLFSEAMAVHPKGVDIMKPGGLVKDPISALSLGLGLMFGTAGLPHILMRFFTVSDAREARKSVFYATGFMGYFYILTFIIGFGAIMLVGANPEYKDAAGHLIGGNNMAAVHLANAVGGNLFLGFISAVAFATILAVVAGLTLAGASAVSHDLYANVFKKGATEREELRVSKITVLILGVIAIILGVLFENQNIAFMVGLAFAIAASCNFPIILLSMYWSKLTTRGAMMGGWLGLITAVVLMILGPTIWVQILGHEKAIFPYEYPALFSITVAFLGIWFFSATDNSAEGARERELFRAQFIRSQTGFGVEQGRAH.

The next 13 helical transmembrane spans lie at 33–53 (WQAI…TYWA), 77–97 (LAIA…ALVF), 103–123 (GLIY…LIAE), 148–168 (ILSA…QMVG), 183–203 (IAVV…GMLA), 206–226 (WVQI…AFMV), 262–282 (ISAL…PHIL), 303–323 (GFMG…IMLV), 355–375 (LFLG…VAGL), 404–424 (VSKI…VLFE), 428–448 (IAFM…PIIL), 464–484 (GGWL…TIWV), and 493–513 (IFPY…GIWF).

This sequence belongs to the sodium:solute symporter (SSF) (TC 2.A.21) family.

It is found in the cell inner membrane. Functionally, transports acetate. The sequence is that of Cation/acetate symporter ActP from Escherichia fergusonii (strain ATCC 35469 / DSM 13698 / CCUG 18766 / IAM 14443 / JCM 21226 / LMG 7866 / NBRC 102419 / NCTC 12128 / CDC 0568-73).